The primary structure comprises 145 residues: Bacilliredoxin SERP1006 (145 aa).

It belongs to the bacilliredoxin family.

This chain is Bacilliredoxin SERP1006, found in Staphylococcus epidermidis (strain ATCC 35984 / DSM 28319 / BCRC 17069 / CCUG 31568 / BM 3577 / RP62A).